Reading from the N-terminus, the 62-residue chain is Short neurotoxin 2 (62 aa).

The interval 1-20 is disordered; the sequence is MTCYNQQSSEAKTTTTCSGG. Cystine bridges form between Cys-3–Cys-24, Cys-17–Cys-41, Cys-43–Cys-54, and Cys-55–Cys-60.

It belongs to the three-finger toxin family. Short-chain subfamily. Type I alpha-neurotoxin sub-subfamily. Expressed by the venom gland.

Its subcellular location is the secreted. Binds to muscle nicotinic acetylcholine receptor (nAChR) and inhibit acetylcholine from binding to the receptor, thereby impairing neuromuscular transmission. The polypeptide is Short neurotoxin 2 (Oxyuranus scutellatus scutellatus (Australian taipan)).